The following is a 454-amino-acid chain: 3-phosphoshikimate 1-carboxyvinyltransferase (454 aa).

The 3-phosphoshikimate site is built by K39, S40, and R44. K39 serves as a coordination point for phosphoenolpyruvate. Phosphoenolpyruvate-binding residues include G112 and R140. 4 residues coordinate 3-phosphoshikimate: S185, Q187, D333, and K360. A phosphoenolpyruvate-binding site is contributed by Q187. D333 acts as the Proton acceptor in catalysis. The phosphoenolpyruvate site is built by R364 and R405.

Belongs to the EPSP synthase family. Monomer.

It localises to the cytoplasm. The enzyme catalyses 3-phosphoshikimate + phosphoenolpyruvate = 5-O-(1-carboxyvinyl)-3-phosphoshikimate + phosphate. The protein operates within metabolic intermediate biosynthesis; chorismate biosynthesis; chorismate from D-erythrose 4-phosphate and phosphoenolpyruvate: step 6/7. Its function is as follows. Catalyzes the transfer of the enolpyruvyl moiety of phosphoenolpyruvate (PEP) to the 5-hydroxyl of shikimate-3-phosphate (S3P) to produce enolpyruvyl shikimate-3-phosphate and inorganic phosphate. This is 3-phosphoshikimate 1-carboxyvinyltransferase from Xylella fastidiosa (strain Temecula1 / ATCC 700964).